Reading from the N-terminus, the 797-residue chain is Short transient receptor potential channel 4-associated protein (797 aa).

Ala2 bears the N-acetylalanine mark. The tract at residues 2–400 (AAAPAAAGAG…VLYVLCVLLM (399 aa)) is interaction with TNFRSF1A.

In terms of assembly, component of the DCX(TRPC4AP) E3 ubiquitin ligase complex, at least composed of CUL4A, DDB1, TRPC4AP/TRUSS and RBX1. Interacts with MYC. Constitutively associated with TNFRSF1A. Directly interacts with TRADD, TRAF2, CHUK, IKBKB and IKBKG. Interacts with TRPC1, TRPC4 and TRPC5. In terms of processing, phosphorylated by GSK3B; phosphorylation is required for ubiquitination. Ubiquitinated by a SCF (SKP1-CUL1-F-box protein) E3 ubiquitin-protein ligase containing SKP2, leading to its degradation. Phosphorylation by GSK3B is required for ubiquitination. Widely expressed, with high levels in heart, liver and testis.

It is found in the cytoplasm. It localises to the perinuclear region. It participates in protein modification; protein ubiquitination. Its function is as follows. Substrate-recognition component of a DCX (DDB1-CUL4-X-box) E3 ubiquitin-protein ligase complex required for cell cycle control. The DCX(TRPC4AP) complex specifically mediates the polyubiquitination and subsequent degradation of MYC as part of the DesCEND (destruction via C-end degrons) pathway. The DesCEND (destruction via C-end degrons) pathway recognizes a C-degron located at the extreme C terminus of target proteins, leading to their ubiquitination and degradation. The DCX(TRPC4AP) complex specifically recognizes proteins with an arginine at the minus 3 position (R-3 motif) at the C-terminus, such as MYC, leading to their ubiquitination and degradation. Also participates in the activation of NFKB1 in response to ligation of TNFRSF1A, possibly by linking TNFRSF1A to the IKK signalosome. Involved in JNK activation via its interaction with TRAF2. Also involved in elevation of endoplasmic reticulum Ca(2+) storage reduction in response to CHRM1. The chain is Short transient receptor potential channel 4-associated protein from Mus musculus (Mouse).